A 290-amino-acid polypeptide reads, in one-letter code: Probable aquaporin PIP2-1 (290 aa).

2 consecutive transmembrane segments (helical) span residues 43–63 (AVIA…ATVI) and 80–100 (CGGV…FILV). Residues 112-114 (NPA) carry the NPA 1 motif. 3 consecutive transmembrane segments (helical) span residues 131-151 (ILYI…VKAF), 173-193 (GTGL…VFSA), and 207-227 (VLAP…TIPI). An NPA 2 motif is present at residues 233 to 235 (NPA). A helical membrane pass occupies residues 255–275 (IFWVGPFVGAAIAAFYHQYIL).

The protein belongs to the MIP/aquaporin (TC 1.A.8) family. PIP (TC 1.A.8.11) subfamily. As to expression, expressed in roots, leaves and anthers.

Its subcellular location is the cell membrane. Its function is as follows. Aquaporins facilitate the transport of water and small neutral solutes across cell membranes. The protein is Probable aquaporin PIP2-1 (PIP2-1) of Oryza sativa subsp. japonica (Rice).